We begin with the raw amino-acid sequence, 319 residues long: uncharacterized protein (319 aa).

The SIS domain maps to 36 to 178 (IIEFLLSFKG…MTVIHEERGF (143 aa)). Residue 51 to 56 (GIGKSG) participates in ATP binding. CBS domains lie at 203–263 (MRSG…HLKT) and 268–319 (MTKN…MGVS).

This sequence belongs to the SIS family. GutQ/KpsF subfamily.

This is an uncharacterized protein from Rickettsia prowazekii (strain Madrid E).